Here is a 225-residue protein sequence, read N- to C-terminus: mRNA-decapping protein D10 (225 aa).

The Nudix hydrolase domain maps to 35 to 218; the sequence is AKYPLSVIGI…NVIKYIINAV (184 aa). Residues 116–137 carry the Nudix box motif; that stretch reads GKIKDLESITNCLVREIKEELN. Position 122 (E122) interacts with Mg(2+). Catalysis depends on E131, which acts as the Nucleophile. E135 lines the Mn(2+) pocket. A Mg(2+)-binding site is contributed by D157.

Belongs to the Nudix hydrolase family. It depends on Mg(2+) as a cofactor. Mn(2+) is required as a cofactor.

Functionally, decapping enzyme required for the removal of the 5'-end m7GpppN cap tethered to viral and host mRNAs to allow their decay in cells. May therefore accelerate viral and cellular mRNA turnover to eliminate competing host mRNAs and allow stage-specific synthesis of viral proteins. Acceleration of the turnover of cellular transcripts may even promote the shutoff of host protein synthesis. The sequence is that of mRNA-decapping protein D10 from Fowlpox virus (strain NVSL) (FPV).